A 216-amino-acid chain; its full sequence is ATP-dependent Clp protease proteolytic subunit (216 aa).

S101 (nucleophile) is an active-site residue. The active site involves H126.

This sequence belongs to the peptidase S14 family. Component of the chloroplastic Clp protease core complex.

It localises to the plastid. The protein resides in the chloroplast stroma. It carries out the reaction Hydrolysis of proteins to small peptides in the presence of ATP and magnesium. alpha-casein is the usual test substrate. In the absence of ATP, only oligopeptides shorter than five residues are hydrolyzed (such as succinyl-Leu-Tyr-|-NHMec, and Leu-Tyr-Leu-|-Tyr-Trp, in which cleavage of the -Tyr-|-Leu- and -Tyr-|-Trp bonds also occurs).. Its function is as follows. Cleaves peptides in various proteins in a process that requires ATP hydrolysis. Has a chymotrypsin-like activity. Plays a major role in the degradation of misfolded proteins. The protein is ATP-dependent Clp protease proteolytic subunit of Saccharum hybrid (Sugarcane).